The primary structure comprises 659 residues: MGKYSVLMIFIASSLLIVLQNVEIVNAVGCTGSFFNGNSSYAQNRRDLFSTLPNKVVTNGGFYNSSLGKSPNIVHAVALCGRGYEQQACIRCVDSAIQGILTTTSCLNRVDSFTWDKDEEDNVSCLVSTSNHSTFGNLELRPSVRYQSPNSIEPSKNMTLFEQEWNAMANRTVESATEAETSSVLKYYSAEKAEFTEFPNVYMLMQCTPDITSQDCKTCLGECVTLFKEQVWGRQGGEVYRPSCFFRWDLYAFHGAFDNVTRVPAPPRPQAQGNESSITKKKGRSIGYGGIIAIVVVLTFINILVFIGYIKVYGRRKESYNKINVGSAEYSDSDGQFMLRFDLGMVLAATDEFSSENTLGQGGFGTVYKGTLLNGQEVAVKRLTKGSGQGDIEFKNEVSLLTRLQHRNLVKLLGFCNEGDEQILVYEFVPNSSLDHFIFDDEKRSLLTWEMRYRIIEGIARGLLYLHEDSQLKIIHRDLKASNILLDAEMNPKVADFGTARLFDSDETRAETKRIAGTRGYMAPEYLNHGQISAKSDVYSFGVMLLEMISGERNNSFEGEGLAAFAWKRWVEGKPEIIIDPFLIEKPRNEIIKLIQIGLLCVQENPTKRPTMSSVIIWLGSETNIIPLPKAPAFTGSRSQSEIGAMSMSDDVFTELSCR.

The N-terminal stretch at 1 to 27 is a signal peptide; it reads MGKYSVLMIFIASSLLIVLQNVEIVNA. 2 consecutive Gnk2-homologous domains span residues 28-134 and 142-253; these read VGCT…NHST and PSVR…LYAF. Over 28 to 289 the chain is Extracellular; that stretch reads VGCTGSFFNG…KKKGRSIGYG (262 aa). N-linked (GlcNAc...) asparagine glycans are attached at residues asparagine 38, asparagine 64, asparagine 122, asparagine 131, asparagine 157, asparagine 170, asparagine 259, and asparagine 274. Residues 290-310 traverse the membrane as a helical segment; that stretch reads GIIAIVVVLTFINILVFIGYI. Residues 311–659 lie on the Cytoplasmic side of the membrane; the sequence is KVYGRRKESY…DDVFTELSCR (349 aa). Positions 353 to 619 constitute a Protein kinase domain; sequence FSSENTLGQG…PTMSSVIIWL (267 aa). ATP contacts are provided by residues 359 to 367 and lysine 381; that span reads LGQGGFGTV. Position 426 is a phosphotyrosine (tyrosine 426). Residue aspartate 478 is the Proton acceptor of the active site. Position 482 is a phosphoserine (serine 482). Threonine 518 carries the phosphothreonine modification. Tyrosine 526 carries the phosphotyrosine modification.

This sequence belongs to the protein kinase superfamily. Ser/Thr protein kinase family. CRK subfamily.

Its subcellular location is the membrane. It carries out the reaction L-seryl-[protein] + ATP = O-phospho-L-seryl-[protein] + ADP + H(+). The catalysed reaction is L-threonyl-[protein] + ATP = O-phospho-L-threonyl-[protein] + ADP + H(+). The polypeptide is Putative cysteine-rich receptor-like protein kinase 39 (CRK39) (Arabidopsis thaliana (Mouse-ear cress)).